The following is a 184-amino-acid chain: Acireductone dioxygenase 4 (184 aa).

Fe(2+) is bound by residues His86, His88, Glu92, and His131. Residues His86, His88, Glu92, and His131 each contribute to the Ni(2+) site.

The protein belongs to the acireductone dioxygenase (ARD) family. The cofactor is Fe(2+). Ni(2+) is required as a cofactor.

The protein localises to the cytoplasm. Its subcellular location is the nucleus. The enzyme catalyses 1,2-dihydroxy-5-(methylsulfanyl)pent-1-en-3-one + O2 = 4-methylsulfanyl-2-oxobutanoate + formate + 2 H(+). The catalysed reaction is 1,2-dihydroxy-5-(methylsulfanyl)pent-1-en-3-one + O2 = 3-(methylsulfanyl)propanoate + CO + formate + 2 H(+). Its pathway is amino-acid biosynthesis; L-methionine biosynthesis via salvage pathway; L-methionine from S-methyl-5-thio-alpha-D-ribose 1-phosphate: step 5/6. Its function is as follows. Catalyzes 2 different reactions between oxygen and the acireductone 1,2-dihydroxy-3-keto-5-methylthiopentene (DHK-MTPene) depending upon the metal bound in the active site. Fe-containing acireductone dioxygenase (Fe-ARD) produces formate and 2-keto-4-methylthiobutyrate (KMTB), the alpha-ketoacid precursor of methionine in the methionine recycle pathway. Ni-containing acireductone dioxygenase (Ni-ARD) produces methylthiopropionate, carbon monoxide and formate, and does not lie on the methionine recycle pathway. The polypeptide is Acireductone dioxygenase 4 (ARD4) (Oryza sativa subsp. japonica (Rice)).